We begin with the raw amino-acid sequence, 332 residues long: Glycerol-3-phosphate dehydrogenase [NAD(P)+] (332 aa).

NADPH-binding residues include Trp-11, Arg-30, and Lys-108. Sn-glycerol 3-phosphate contacts are provided by Lys-108, Gly-137, and Ser-139. NADPH is bound at residue Ala-141. Sn-glycerol 3-phosphate is bound by residues Lys-192, Asp-245, Ser-255, Arg-256, and Asn-257. The active-site Proton acceptor is Lys-192. Position 256 (Arg-256) interacts with NADPH. NADPH contacts are provided by Val-280 and Glu-282.

The protein belongs to the NAD-dependent glycerol-3-phosphate dehydrogenase family.

It is found in the cytoplasm. The enzyme catalyses sn-glycerol 3-phosphate + NAD(+) = dihydroxyacetone phosphate + NADH + H(+). It catalyses the reaction sn-glycerol 3-phosphate + NADP(+) = dihydroxyacetone phosphate + NADPH + H(+). Its pathway is membrane lipid metabolism; glycerophospholipid metabolism. Its function is as follows. Catalyzes the reduction of the glycolytic intermediate dihydroxyacetone phosphate (DHAP) to sn-glycerol 3-phosphate (G3P), the key precursor for phospholipid synthesis. This chain is Glycerol-3-phosphate dehydrogenase [NAD(P)+], found in Burkholderia vietnamiensis (strain G4 / LMG 22486) (Burkholderia cepacia (strain R1808)).